The following is a 43-amino-acid chain: Protein PsbN (43 aa).

Residues 5–27 (TLVAISISGSLVSFTGYALYTAF) form a helical membrane-spanning segment.

The protein belongs to the PsbN family.

Its subcellular location is the plastid. The protein localises to the chloroplast thylakoid membrane. In terms of biological role, may play a role in photosystem I and II biogenesis. The protein is Protein PsbN of Drimys granadensis.